We begin with the raw amino-acid sequence, 69 residues long: DNA-directed RNA polymerase subunit epsilon (69 aa).

The protein belongs to the RNA polymerase subunit epsilon family. In terms of assembly, RNAP is composed of a core of 2 alpha, a beta and a beta' subunit. The core is associated with a delta subunit, and at least one of epsilon or omega. When a sigma factor is associated with the core the holoenzyme is formed, which can initiate transcription.

The catalysed reaction is RNA(n) + a ribonucleoside 5'-triphosphate = RNA(n+1) + diphosphate. Functionally, a non-essential component of RNA polymerase (RNAP). This Listeria monocytogenes serotype 4b (strain CLIP80459) protein is DNA-directed RNA polymerase subunit epsilon.